The primary structure comprises 479 residues: Gamma-aminobutyric acid receptor subunit rho-1 (479 aa).

Positions 1 to 21 (MLAVPNMRFGIFLLWWGWVLA) are cleaved as a signal peptide. Residues 22 to 280 (TESRMHWPGR…LYINFTLRRH (259 aa)) are Extracellular-facing. Positions 32–55 (EVHEMSKKGRPQRQRREVHEDAHK) are disordered. Positions 45–55 (QRREVHEDAHK) are enriched in basic and acidic residues. Residue Arg125 participates in 4-aminobutanoate binding. The N-linked (GlcNAc...) asparagine glycan is linked to Asn140. A 4-aminobutanoate-binding site is contributed by Ser189. Cys198 and Cys212 are joined by a disulfide. Glu217 contributes to the 4-aminobutanoate binding site. N-linked (GlcNAc...) asparagine glycosylation is found at Asn234 and Asn274. Residues 281-301 (IFFFLLQTYFPATLMVMLSWV) form a helical membrane-spanning segment. At 302–313 (SFWIDRRAVPAR) the chain is on the cytoplasmic side. The helical transmembrane segment at 314-334 (VPLGITTVLTMSTIITGVNAS) threads the bilayer. The Extracellular portion of the chain corresponds to 335–345 (MPRVSYIKAVD). A helical membrane pass occupies residues 346-366 (IYLWVSFVFVFLSVLEYAAVN). Residues 367–457 (YLTTVQERKE…MRIDTHAIDK (91 aa)) lie on the Cytoplasmic side of the membrane. A helical transmembrane segment spans residues 458–478 (YSRIIFPAAYILFNLIYWSIF). Residue Ser479 is a topological domain, extracellular.

It belongs to the ligand-gated ion channel (TC 1.A.9) family. Gamma-aminobutyric acid receptor (TC 1.A.9.5) subfamily. GABRR1 sub-subfamily. In terms of assembly, three rho subunits (rho-1/GBRR1, rho-2/GBRR2 and rho-3/GBRR3) coassemble either to form functional homopentamers or heteropentamers. Rho-1/GBRR1 subunits can also associate with alpha-1/GBRA1 subunits to form a functional GABAAR. Interacts with SQSTM1. In terms of tissue distribution, highly expressed in the retina. Expressed in a lesser extent in brain, lung and thymus.

The protein localises to the postsynaptic cell membrane. Its subcellular location is the cell membrane. The enzyme catalyses chloride(in) = chloride(out). Inhibited by TPMPA, a rho-specific antagonist, when forming a homopentamer. In contrast with other GABAARs, rho-1 GABAAR is not inhibited by bicuculline, when forming a homopentamer. Its function is as follows. Rho subunit of the pentameric ligand-gated chloride channels responsible for mediating the effects of gamma-aminobutyric acid (GABA), the major inhibitory neurotransmitter in the brain. Rho-containing GABA-gated chloride channels are a subclass of GABA(A) receptors (GABAARs) entirely composed of rho subunits, where GABA molecules bind at the rho intersubunit interfaces. When activated by GABA, rho-GABAARs selectively allow the flow of chloride anions across the cell membrane down their electrochemical gradient. Rho-1 subunits are primarily expressed in retina where rho-1-containing GABAARs may play a role in retinal neurotransmission. Rho-1 GABAARs are also involved in neuronal tonic (extrasynaptic) and phasic (synaptic) transmission in the Purkinje neurons of the cerebellum. Rho-1 GABAARs may also contribute to the regulation of glial development in the cerebellum by controlling extrasynaptic transmission. The polypeptide is Gamma-aminobutyric acid receptor subunit rho-1 (Homo sapiens (Human)).